The primary structure comprises 533 residues: Protein mono-ADP-ribosyltransferase PARP3 (533 aa).

Residues 1–30 (MAPKPKPWVQTEGPEKKKGRQAGREEDPFR) form a disordered region. K6 is modified (N6-(ADP-ribosyl)lysine). ADP-ribosyl glutamic acid occurs at positions 12, 15, 26, and 34. A Nuclear localization signal motif is present at residues 14–20 (PEKKKGR). Residue K37 is modified to N6-(ADP-ribosyl)lysine. The region spanning 59 to 150 (GTQVYEDYNC…DHFVSHPGKY (92 aa)) is the WGR domain. An ADP-ribosyl aspartic acid modification is found at D141. E163 is subject to ADP-ribosyl glutamic acid. Residues 182 to 300 (PCSLDPATQK…DIELAQALQA (119 aa)) form the PARP alpha-helical domain. An ADP-ribosyl aspartic acid modification is found at D210. ADP-ribosyl glutamic acid occurs at positions 231, 309, 310, 344, and 449. Positions 313–533 (HPLDRDYQLL…RLRYLLEVHL (221 aa)) constitute a PARP catalytic domain. The tract at residues 454–482 (TDNPSLKSPPPGFDSVIARGHTEPDPTQD) is disordered.

Belongs to the ARTD/PARP family. As to quaternary structure, interacts with PARP1; leading to activate PARP1 in absence of DNA. Interacts with PRKDC. Interacts with XRCC5/Ku80; the interaction is dependent on nucleic acids. Interacts with XRCC6/Ku70; the interaction is dependent on nucleic acids. Interacts with EZH2, HDAC1, HDAC2, SUZ12, YY1, LRIG3 and LIG4. In terms of processing, auto-mono-ADP-ribosylated. Widely expressed; the highest levels are in the kidney, skeletal muscle, liver, heart and spleen; also detected in pancreas, lung, placenta, brain, leukocytes, colon, small intestine, ovary, testis, prostate and thymus.

It localises to the nucleus. Its subcellular location is the chromosome. The protein resides in the cytoplasm. The protein localises to the cytoskeleton. It is found in the microtubule organizing center. It localises to the centrosome. Its subcellular location is the centriole. It carries out the reaction L-aspartyl-[protein] + NAD(+) = 4-O-(ADP-D-ribosyl)-L-aspartyl-[protein] + nicotinamide. The catalysed reaction is L-glutamyl-[protein] + NAD(+) = 5-O-(ADP-D-ribosyl)-L-glutamyl-[protein] + nicotinamide. It catalyses the reaction L-lysyl-[protein] + NAD(+) = N(6)-(ADP-D-ribosyl)-L-lysyl-[protein] + nicotinamide + H(+). Mono-ADP-ribosyltransferase activity of PARP3 is selectively inhibited by ME0328 compound; ME0328 does not inhibit other ARTD/PARP enzymes, such as PARP1. Mono-ADP-ribosyltransferase is strongly inhibited by KU0058948 compound. In terms of biological role, mono-ADP-ribosyltransferase that mediates mono-ADP-ribosylation of target proteins and plays a key role in the response to DNA damage. Mediates mono-ADP-ribosylation of glutamate, aspartate or lysine residues on target proteins. In contrast to PARP1 and PARP2, it is not able to mediate poly-ADP-ribosylation. Involved in DNA repair by mediating mono-ADP-ribosylation of a limited number of acceptor proteins involved in chromatin architecture and in DNA metabolism, such as histone H2B, XRCC5 and XRCC6. ADP-ribosylation follows DNA damage and appears as an obligatory step in a detection/signaling pathway leading to the reparation of DNA strand breaks. Involved in single-strand break repair by catalyzing mono-ADP-ribosylation of histone H2B on 'Glu-2' (H2BE2ADPr) of nucleosomes containing nicked DNA. Cooperates with the XRCC5-XRCC6 (Ku80-Ku70) heterodimer to limit end-resection thereby promoting accurate NHEJ. Suppresses G-quadruplex (G4) structures in response to DNA damage. Associates with a number of DNA repair factors and is involved in the response to exogenous and endogenous DNA strand breaks. Together with APLF, promotes the retention of the LIG4-XRCC4 complex on chromatin and accelerate DNA ligation during non-homologous end-joining (NHEJ). May link the DNA damage surveillance network to the mitotic fidelity checkpoint. Acts as a negative regulator of immunoglobulin class switch recombination, probably by controlling the level of AICDA /AID on the chromatin. In addition to proteins, also able to ADP-ribosylate DNA: mediates DNA mono-ADP-ribosylation of DNA strand break termini via covalent addition of a single ADP-ribose moiety to a 5'- or 3'-terminal phosphate residues in DNA containing multiple strand breaks. The protein is Protein mono-ADP-ribosyltransferase PARP3 of Homo sapiens (Human).